Consider the following 99-residue polypeptide: Protein AC4 (99 aa).

Belongs to the geminiviridae protein AC4/C4 family.

Pathogenicity determinant. May act as a suppressor of RNA-mediated gene silencing, also known as post-transcriptional gene silencing (PTGS), a mechanism of plant viral defense that limits the accumulation of viral RNAs. The protein is Protein AC4 of Glycine max (Soybean).